We begin with the raw amino-acid sequence, 88 residues long: Insertion element ISR1 uncharacterized 10 kDa protein A3 (88 aa).

The protein belongs to the transposase 8 family.

This Rhizobium sp protein is Insertion element ISR1 uncharacterized 10 kDa protein A3.